The following is a 413-amino-acid chain: Multifunctional CCA protein (413 aa).

Residues glycine 8 and arginine 11 each contribute to the ATP site. CTP contacts are provided by glycine 8 and arginine 11. Residues aspartate 21 and aspartate 23 each coordinate Mg(2+). ATP is bound by residues arginine 91, arginine 137, and arginine 140. The CTP site is built by arginine 91, arginine 137, and arginine 140. The 102-residue stretch at 228–329 folds into the HD domain; sequence TGIHTLMVLE…VKIFDKADLW (102 aa).

This sequence belongs to the tRNA nucleotidyltransferase/poly(A) polymerase family. Bacterial CCA-adding enzyme type 1 subfamily. As to quaternary structure, monomer. Can also form homodimers and oligomers. It depends on Mg(2+) as a cofactor. Requires Ni(2+) as cofactor.

The enzyme catalyses a tRNA precursor + 2 CTP + ATP = a tRNA with a 3' CCA end + 3 diphosphate. It carries out the reaction a tRNA with a 3' CCA end + 2 CTP + ATP = a tRNA with a 3' CCACCA end + 3 diphosphate. Functionally, catalyzes the addition and repair of the essential 3'-terminal CCA sequence in tRNAs without using a nucleic acid template. Adds these three nucleotides in the order of C, C, and A to the tRNA nucleotide-73, using CTP and ATP as substrates and producing inorganic pyrophosphate. tRNA 3'-terminal CCA addition is required both for tRNA processing and repair. Also involved in tRNA surveillance by mediating tandem CCA addition to generate a CCACCA at the 3' terminus of unstable tRNAs. While stable tRNAs receive only 3'-terminal CCA, unstable tRNAs are marked with CCACCA and rapidly degraded. In Shewanella sediminis (strain HAW-EB3), this protein is Multifunctional CCA protein.